A 1010-amino-acid chain; its full sequence is Eukaryotic translation initiation factor 4E transporter (1010 aa).

The short motif at 10-16 (YSKVDLL) is the YXXXXLphi motif element. 5 disordered regions span residues 154–182 (GSNS…RKGS), 196–277 (PDHD…RLVE), 289–320 (YDSK…SKRG), 354–391 (NEER…SNDS), and 921–960 (QSNP…ERIS). Positions 201–211 (CMSSSPTFSTS) are enriched in polar residues. Residues 227 to 247 (DNWDYKNEKTVEASIENEKET) are compositionally biased toward basic and acidic residues. Over residues 248-263 (SPNGSGSTSSLNQHNQ) the composition is skewed to polar residues. 2 stretches are compositionally biased toward basic and acidic residues: residues 354 to 364 (NEERSVTEDKN) and 372 to 384 (KNLD…DEAS). Positions 934 to 953 (SDSSDSGNVIKANSLTSPSY) are enriched in polar residues.

It belongs to the 4E-T/EIF4E-T family. In terms of assembly, interacts (via YXXXXLphi motif) with eIF4E1. Interacts with DDX6/me31B. In terms of tissue distribution, expressed in all larval and adult organs and tissues, with highest levels in the ovary.

It localises to the cytoplasm. The protein resides in the P-body. Its subcellular location is the nucleus. Its function is as follows. eIF4E1-binding protein that regulates translation and stability of mRNAs in processing bodies (P-bodies). Probably plays a role in P-bodies to coordinate the storage of translationally inactive mRNAs in the cytoplasm and prevent their degradation. Acts as a binding platform for multiple RNA-binding proteins. Required for the formation of P-bodies. The sequence is that of Eukaryotic translation initiation factor 4E transporter from Drosophila melanogaster (Fruit fly).